The chain runs to 509 residues: Maturase K (509 aa).

This sequence belongs to the intron maturase 2 family. MatK subfamily.

The protein localises to the plastid. It localises to the chloroplast. Functionally, usually encoded in the trnK tRNA gene intron. Probably assists in splicing its own and other chloroplast group II introns. The sequence is that of Maturase K from Nymphaea odorata (White water lily).